We begin with the raw amino-acid sequence, 356 residues long: Peptide chain release factor 1 (356 aa).

At Gln232 the chain carries N5-methylglutamine.

The protein belongs to the prokaryotic/mitochondrial release factor family. Methylated by PrmC. Methylation increases the termination efficiency of RF1.

It localises to the cytoplasm. Functionally, peptide chain release factor 1 directs the termination of translation in response to the peptide chain termination codons UAG and UAA. The polypeptide is Peptide chain release factor 1 (Thermoanaerobacter pseudethanolicus (strain ATCC 33223 / 39E) (Clostridium thermohydrosulfuricum)).